A 202-amino-acid chain; its full sequence is MKICGITDVETAKSACEYGADALGFVFAESKREITPKRAEEIIQELPANVLKIGVFVNESVEVIQKIADECGLTHVQLHGDEDNYQIRRLNIPSIKSLGVTSESDMKNAQGYEADYILFDSPKEKFHGGNGKTFSWELLRDMPKELRKKMILAGGLNALNIEEAIRTVRPYMVDVSSGVETEGKKDVEKIKQFIIKAKECSK.

This sequence belongs to the TrpF family.

The catalysed reaction is N-(5-phospho-beta-D-ribosyl)anthranilate = 1-(2-carboxyphenylamino)-1-deoxy-D-ribulose 5-phosphate. It functions in the pathway amino-acid biosynthesis; L-tryptophan biosynthesis; L-tryptophan from chorismate: step 3/5. In Bacillus cereus (strain ATCC 14579 / DSM 31 / CCUG 7414 / JCM 2152 / NBRC 15305 / NCIMB 9373 / NCTC 2599 / NRRL B-3711), this protein is N-(5'-phosphoribosyl)anthranilate isomerase.